Consider the following 466-residue polypeptide: Putative multidrug resistance protein MdtD (466 aa).

Transmembrane regions (helical) follow at residues L11–A31, S48–A68, I71–C91, V105–I125, F137–V157, W164–M184, F194–D214, S218–L238, F262–M282, G292–I312, V328–A347, W351–F370, S402–A422, and T429–F449.

Belongs to the major facilitator superfamily. TCR/Tet family.

The protein localises to the cell inner membrane. The sequence is that of Putative multidrug resistance protein MdtD from Pectobacterium atrosepticum (strain SCRI 1043 / ATCC BAA-672) (Erwinia carotovora subsp. atroseptica).